The chain runs to 701 residues: E3 ubiquitin-protein ligase RNF19B (701 aa).

Positions 1–97 (MGSEKDSESP…PAEPLSTSQA (97 aa)) are disordered. Residues 1–304 (MGSEKDSESP…VCGCEFCWLC (304 aa)) are required for ubiquitin ligase activity and for protection against staurosporin-induced cell death. The span at 57-72 (QQLHQQQQIQQQQLLQ) shows a compositional bias: low complexity. Residues 103–323 (ELLECPLCLV…LSPSGCTFWG (221 aa)) are TRIAD supradomain. Zn(2+)-binding residues include Cys-107, Cys-110, Cys-130, Cys-133, Cys-194, Cys-199, Cys-216, Cys-221, Cys-226, Cys-229, His-234, Cys-239, Cys-273, and Cys-276. The RING-type 1 zinc finger occupies 107 to 156 (CPLCLVRQPAEQLPELQGCSHRSCLCCLRQYLRIEITESRVQLSCPECAE). The segment at 174–239 (EKYEEFLLRR…KQAWHPNQTC (66 aa)) adopts an IBR-type zinc-finger fold. The RING-type 2; atypical zinc finger occupies 273–304 (CPRCGAYIIKMNDGSCNHMTCAVCGCEFCWLC). Residue Cys-288 is part of the active site. The Zn(2+) site is built by Cys-293, Cys-296, Cys-301, Cys-304, His-312, and Cys-319. The next 2 helical transmembrane spans lie at 340–360 (LIGA…AMVI) and 396–416 (IITA…IMLA). Disordered stretches follow at residues 472 to 495 (LEGA…PGGL) and 658 to 677 (AELT…HGAP).

This sequence belongs to the RBR family. RNF19 subfamily. Interacts with UBE2L3, UBE2L6 and UCKL1.

The protein localises to the cytoplasmic granule membrane. Its subcellular location is the endoplasmic reticulum membrane. It catalyses the reaction [E2 ubiquitin-conjugating enzyme]-S-ubiquitinyl-L-cysteine + [acceptor protein]-L-lysine = [E2 ubiquitin-conjugating enzyme]-L-cysteine + [acceptor protein]-N(6)-ubiquitinyl-L-lysine.. Its pathway is protein modification; protein ubiquitination. In terms of biological role, E3 ubiquitin-protein ligase which accepts ubiquitin from E2 ubiquitin-conjugating enzymes UBE2L3 and UBE2L6 in the form of a thioester and then directly transfers the ubiquitin to targeted substrates, such as UCKL1. Involved in the cytolytic activity of natural killer cells and cytotoxic T-cells. Protects against staurosporin-induced cell death. The protein is E3 ubiquitin-protein ligase RNF19B (rnf19b) of Danio rerio (Zebrafish).